A 64-amino-acid polypeptide reads, in one-letter code: Large ribosomal subunit protein bL35 (64 aa).

The protein belongs to the bacterial ribosomal protein bL35 family.

The chain is Large ribosomal subunit protein bL35 from Acidothermus cellulolyticus (strain ATCC 43068 / DSM 8971 / 11B).